Consider the following 338-residue polypeptide: Palmitoyltransferase ZDHHC15 (338 aa).

Topologically, residues 1–20 (MLAGCRVALPRGLRCCQRVL) are cytoplasmic. Residues 21-41 (SWVPVVIISLVVLWSYYAYVW) form a helical membrane-spanning segment. Residues 42 to 56 (ELCLVTVTNPAEKAA) are Lumenal-facing. The chain crosses the membrane as a helical span at residues 57-77 (YLLIFHTVFLLFIWTYWKAIF). The Cytoplasmic segment spans residues 78–172 (TPPKQPTKKF…NNCIGYSNYK (95 aa)). The DHHC domain occupies 129 to 179 (RFCDTCQMVKPDRCHHCSVCGMCVLKMDHHCPWVNNCIGYSNYKFFLLFLA). 7 residues coordinate Zn(2+): Cys-131, Cys-134, His-144, Cys-145, Cys-148, Cys-151, and His-158. The active-site S-palmitoyl cysteine intermediate is Cys-159. Zn(2+) is bound at residue Cys-165. The chain crosses the membrane as a helical span at residues 173–193 (FFLLFLAYAMLYCLYIGCTVF). Residues 194–210 (QYFILYWTDTLSNGRAK) lie on the Lumenal side of the membrane. Residues 211-234 (FHVLFLLFVALMFFISLMFLFGYH) traverse the membrane as a helical segment. The Cytoplasmic portion of the chain corresponds to 235–338 (CWLVSLNRTT…TSHITVHIEK (104 aa)).

Belongs to the DHHC palmitoyltransferase family. In terms of processing, autopalmitoylated (in vitro).

It localises to the golgi apparatus membrane. The protein resides in the postsynaptic density. The enzyme catalyses L-cysteinyl-[protein] + hexadecanoyl-CoA = S-hexadecanoyl-L-cysteinyl-[protein] + CoA. The catalysed reaction is L-cysteinyl-[protein] + tetradecanoyl-CoA = S-tetradecanoyl-L-cysteinyl-[protein] + CoA. It carries out the reaction L-cysteinyl-[protein] + octadecanoyl-CoA = S-octadecanoyl-L-cysteinyl-[protein] + CoA. Functionally, palmitoyltransferase that catalyzes the addition of palmitate onto various protein substrates. Has no stringent fatty acid selectivity and in addition to palmitate can also transfer onto target proteins myristate from tetradecanoyl-CoA and stearate from octadecanoyl-CoA. May thereby regulate target proteins association and localization to membranes. In the nervous system, probably catalyzes the palmitoylation of synaptic proteins and is involved in the differentiation of dopaminergic neurons and the development of the diencephalon. The sequence is that of Palmitoyltransferase ZDHHC15 (zdhhc15) from Xenopus laevis (African clawed frog).